Here is a 2527-residue protein sequence, read N- to C-terminus: Leucine-rich repeat serine/threonine-protein kinase 2 (2527 aa).

Residues 1 to 969 (MASGACQGCE…RSSRLPSHMR (969 aa)) form a required for RAB29-mediated activation region. Positions 9 to 33 (CEEEEEEEALKKLIVRLNNVQEGKQ) form a coiled coil. Residues S910, S935, S955, and S973 each carry the phosphoserine modification. A disordered region spans residues 957–979 (ESLRSSRLPSHMRQSDSSSSLAS). Low complexity predominate over residues 961–978 (SSRLPSHMRQSDSSSSLA). LRR repeat units lie at residues 983–1004 (HITS…SQKC), 1012–1033 (HLTK…LCET), 1036–1057 (CLIH…VLKM), 1059–1080 (RITN…DPAM), 1084–1105 (SLKQ…LAQV), 1108–1129 (KLEQ…LSLK), 1130–1150 (ELKI…DFLE), 1156–1171 (ESFS…MPAL), 1174–1196 (SITS…FSLP), 1197–1218 (HLRS…AHWK), 1221–1245 (NLRE…HVWS), 1246–1267 (RVEK…IGCL), and 1269–1291 (NLTS…MGKL). A Phosphoserine; by autocatalysis modification is found at S1292. Positions 1328–1511 (KAVPYNRMKL…KTIINESLNF (184 aa)) constitute a Roc domain. Residue 1341-1348 (GNTGSGKT) participates in GTP binding. The residue at position 1444 (S1444) is a Phosphoserine. Positions 1543-1740 (TEFPVINRKH…RMYWRQGIYL (198 aa)) constitute a COR domain. Residues 1879–2146 (EAPEFLLGDG…LICLMRHILI (268 aa)) form the Protein kinase domain. ATP-binding residues include L1885, D1887, G1888, G1891, V1893, A1904, K1906, M1947, E1948, A1950, S1954, and R1957. The Proton acceptor role is filled by D1994. ATP contacts are provided by H1998, L2001, A2016, and D2017. 2098 to 2121 (EYGCAPWPMVEKLITKCLKENPQE) contacts GTP. WD repeat units lie at residues 2139 to 2183 (CLMR…SLFD), 2188 to 2228 (RYSY…LVIN), 2233 to 2276 (TKRH…MIFE), 2281 to 2327 (KCKG…FSFS), 2333 to 2377 (QKLI…EVWD), 2402 to 2438 (KESK…LLLD), and 2443 to 2497 (RVIR…SIWD). 2295 to 2298 (DVST) provides a ligand contact to GTP.

The protein belongs to the protein kinase superfamily. TKL Ser/Thr protein kinase family. In terms of assembly, homodimer. Homotetramer; when activated by GTP-bound RAB29. Interacts with PRKN, PRDX3 and TPCN2. Interacts with VPS35. Interacts (via N-terminus) with RAB29; this interaction is direct and stimulates kinase activity. Interacts (via ROC domain) with SEC16A. Interacts with APP; interaction promotes phosphorylation of 'Thr-743' of APP. Interacts with MAPT. Interacts with RAB8A, RAB10, and RAB12. Interacts (via N-terminus) with RAB32. Interacts with YWHAG; this interaction is dependent on phosphorylation of Ser-910 and either Ser-935 or Ser-1444. Interacts with SFN; this interaction is dependent on phosphorylation of Ser-910 and/or Ser-935. The cofactor is Mg(2+). Autophosphorylated at Ser-1292. Autophosphorylation is stimulated by RAB29. Phosphorylation of Ser-910 and Ser-935 or Ser-1444 facilitates interaction with YWHAG. Phosphorylation of Ser-910 and/or Ser-935 facilitates interaction with SFN. Post-translationally, ubiquitinated by TRIM1; undergoes 'Lys-48'-linked polyubiquitination leading to proteasomal degradation. Expressed in the brain (at protein level). Detected throughout the adult brain. Expressed in deep cerebral cortex layers, superficial cingulate cortex layers, the piriform cortex, hippocampal formation, caudate putamen, substantia nigra, the basolateral and basomedial anterior amygdala nuclei, reticular thalamic nucleus and also in the cerebellar granular cell layer. Highly expressed in the striatum, cortex and olfactory tubercle. Little or no expression in the substantia nigra, where dopaminergic neurons preferentially degenerate in Parkinson disease. Expression is particularly high in brain dopaminoceptive areas. High and strikingly specific expression in striatum and parts of cortex and no signals in dopamine neurons.

It localises to the cytoplasmic vesicle. It is found in the perikaryon. Its subcellular location is the cell projection. The protein localises to the axon. The protein resides in the dendrite. It localises to the golgi apparatus membrane. It is found in the endoplasmic reticulum membrane. Its subcellular location is the secretory vesicle. The protein localises to the synaptic vesicle membrane. The protein resides in the endosome. It localises to the lysosome. It is found in the mitochondrion outer membrane. Its subcellular location is the cytoplasm. The protein localises to the cytoskeleton. The protein resides in the phagosome. The enzyme catalyses L-threonyl-[protein] + ATP = O-phospho-L-threonyl-[protein] + ADP + H(+). It carries out the reaction L-seryl-[protein] + ATP = O-phospho-L-seryl-[protein] + ADP + H(+). The catalysed reaction is GTP + H2O = GDP + phosphate + H(+). With respect to regulation, kinase activity is regulated by the GTPase activity of the ROC domain. GTP-bound LRRK2 kinase activity is stimulated by RAB29. Phosphorylation of RAB10 'Thr-73' is stimulated by RAB29 and RAB32. Inhibited by small molecule inhibitors MLi-2 and LRRK2-IN-1. In terms of biological role, serine/threonine-protein kinase which phosphorylates a broad range of proteins involved in multiple processes such as neuronal plasticity, innate immunity, autophagy, and vesicle trafficking. Is a key regulator of RAB GTPases by regulating the GTP/GDP exchange and interaction partners of RABs through phosphorylation. Phosphorylates RAB3A, RAB3B, RAB3C, RAB3D, RAB8A, RAB8B, RAB10, RAB12, RAB29, RAB35, and RAB43. Regulates the RAB3IP-catalyzed GDP/GTP exchange for RAB8A through the phosphorylation of 'Thr-72' on RAB8A. Inhibits the interaction between RAB8A and GDI1 and/or GDI2 by phosphorylating 'Thr-72' on RAB8A. Regulates primary ciliogenesis through phosphorylation of RAB8A and RAB10, which promotes SHH signaling in the brain. Together with RAB29, plays a role in the retrograde trafficking pathway for recycling proteins, such as mannose-6-phosphate receptor (M6PR), between lysosomes and the Golgi apparatus in a retromer-dependent manner. Regulates neuronal process morphology in the intact central nervous system (CNS). Plays an important role in recruiting SEC16A to endoplasmic reticulum exit sites (ERES) and in regulating ER to Golgi vesicle-mediated transport and ERES organization. Positively regulates autophagy through a calcium-dependent activation of the CaMKK/AMPK signaling pathway. The process involves activation of nicotinic acid adenine dinucleotide phosphate (NAADP) receptors, increase in lysosomal pH, and calcium release from lysosomes. Phosphorylates PRDX3. By phosphorylating APP on 'Thr-743', which promotes the production and the nuclear translocation of the APP intracellular domain (AICD), regulates dopaminergic neuron apoptosis. Acts as a positive regulator of innate immunity by mediating phosphorylation of RIPK2 downstream of NOD1 and NOD2, thereby enhancing RIPK2 activation. Independent of its kinase activity, inhibits the proteasomal degradation of MAPT, thus promoting MAPT oligomerization and secretion. In addition, has GTPase activity via its Roc domain which regulates LRKK2 kinase activity. Recruited by RAB29/RAB7L1 to overloaded lysosomes where it phosphorylates and stabilizes RAB8A and RAB10 which promote lysosomal content release and suppress lysosomal enlargement through the EHBP1 and EHBP1L1 effector proteins. This chain is Leucine-rich repeat serine/threonine-protein kinase 2 (Lrrk2), found in Mus musculus (Mouse).